The following is a 965-amino-acid chain: Phosphatidylethanolamine N-methyltransferase (965 aa).

At 1-82 the chain is on the lumenal side; it reads MDRGLSTGTN…SPSEPKNLSD (82 aa). The disordered stretch occupies residues 34–54; the sequence is PTVTNASNGKDKAGKTFGRTP. A helical transmembrane segment spans residues 83 to 103; that stretch reads LVVLTILAGHIFLLWILPSGA. The Cytoplasmic segment spans residues 104–106; it reads KIP. Residues 107–127 form a helical membrane-spanning segment; it reads VFAVIYLFWRSCYNAGIGWLL. Residues 128-192 lie on the Lumenal side of the membrane; that stretch reads HNQSHHKTLV…EYNTWLVFRR (65 aa). A helical membrane pass occupies residues 193–213; sequence LVDLILMCDFASYCLFAIACS. Over 214–220 the chain is Cytoplasmic; it reads RHPANES. A helical transmembrane segment spans residues 221 to 241; sequence VLMTVIRWTSGIALVLFNLWV. The Lumenal segment spans residues 242–274; sequence KLDAHRVVKDYAWYWGDFFYLIDQELTFDGVFE. Residues 275 to 295 traverse the membrane as a helical segment; sequence MAPHPMYSVGYAGYYGISLMA. At 296–297 the chain is on the cytoplasmic side; sequence AS. Residues 298–318 form a helical membrane-spanning segment; it reads YKVLFISIIAHAAQFAFLVLV. The Lumenal portion of the chain corresponds to 319-394; sequence ENPHIDKTYN…LDLHRITDTS (76 aa). The interval 326–368 is disordered; sequence TYNPPPPRKRTITEHDAASQRSQSPDTPNAPSVSEENVPNATT. Positions 344–368 are enriched in polar residues; that stretch reads SQRSQSPDTPNAPSVSEENVPNATT. The helical transmembrane segment at 395 to 415 threads the bilayer; that stretch reads SILVQFLMFSLTVLTPSTPWY. Residue Q416 is a topological domain, cytoplasmic. A helical membrane pass occupies residues 417-437; the sequence is FLFVANAAIWRLWYSVGIGYL. At 438-470 the chain is on the lumenal side; the sequence is LNRQSNCKSWTRHFVKYGETPHEAWNQWKGTYH. The chain crosses the membrane as a helical span at residues 471–491; the sequence is LSMVMCYASFISAVWKMYTLP. At 492–503 the chain is on the cytoplasmic side; the sequence is SNWGYGLAILRH. A helical transmembrane segment spans residues 504 to 524; the sequence is VLGAGLISLQIWTSVSIYESL. Topologically, residues 525 to 559 are lumenal; the sequence is GEFGWFYGDFFFDESPKLTYNGIYRFLNNPERVLG. The chain crosses the membrane as a helical span at residues 560-580; the sequence is LAGVWGAVLITASGTVAFLAF. Topologically, residues 581–965 are cytoplasmic; that stretch reads LSHILSLGFI…GATTPTESKE (385 aa).

The protein belongs to the class VI-like SAM-binding methyltransferase superfamily. CHO2 family.

The protein localises to the endoplasmic reticulum membrane. The enzyme catalyses a 1,2-diacyl-sn-glycero-3-phosphoethanolamine + S-adenosyl-L-methionine = a 1,2-diacyl-sn-glycero-3-phospho-N-methylethanolamine + S-adenosyl-L-homocysteine + H(+). The protein operates within phospholipid metabolism; phosphatidylcholine biosynthesis. Its function is as follows. Catalyzes the first step of the methylation pathway of phosphatidylcholine biosynthesis, the SAM-dependent methylation of phosphatidylethanolamine (PE) to phosphatidylmonomethylethanolamine (PMME). In Emericella nidulans (strain FGSC A4 / ATCC 38163 / CBS 112.46 / NRRL 194 / M139) (Aspergillus nidulans), this protein is Phosphatidylethanolamine N-methyltransferase.